A 232-amino-acid polypeptide reads, in one-letter code: Phosphoadenosine 5'-phosphosulfate reductase (232 aa).

Cysteine 228 serves as the catalytic Nucleophile; cysteine thiosulfonate intermediate.

Belongs to the PAPS reductase family. CysH subfamily.

It localises to the cytoplasm. It catalyses the reaction [thioredoxin]-disulfide + sulfite + adenosine 3',5'-bisphosphate + 2 H(+) = [thioredoxin]-dithiol + 3'-phosphoadenylyl sulfate. The protein operates within sulfur metabolism; hydrogen sulfide biosynthesis; sulfite from sulfate: step 3/3. Catalyzes the formation of sulfite from phosphoadenosine 5'-phosphosulfate (PAPS) using thioredoxin as an electron donor. This is Phosphoadenosine 5'-phosphosulfate reductase from Synechococcus sp. (strain ATCC 27144 / PCC 6301 / SAUG 1402/1) (Anacystis nidulans).